We begin with the raw amino-acid sequence, 389 residues long: 8-amino-7-oxononanoate synthase (389 aa).

Position 31 (arginine 31) interacts with substrate. 109-110 lines the pyridoxal 5'-phosphate pocket; that stretch reads GY. Residue histidine 134 coordinates substrate. Pyridoxal 5'-phosphate is bound by residues serine 180, 205-208, and 236-239; these read DEAH and TLSK. At lysine 239 the chain carries N6-(pyridoxal phosphate)lysine. Threonine 349 lines the substrate pocket.

It belongs to the class-II pyridoxal-phosphate-dependent aminotransferase family. BioF subfamily. As to quaternary structure, homodimer. Requires pyridoxal 5'-phosphate as cofactor.

It catalyses the reaction 6-carboxyhexanoyl-[ACP] + L-alanine + H(+) = (8S)-8-amino-7-oxononanoate + holo-[ACP] + CO2. The protein operates within cofactor biosynthesis; biotin biosynthesis. Its function is as follows. Catalyzes the decarboxylative condensation of pimeloyl-[acyl-carrier protein] and L-alanine to produce 8-amino-7-oxononanoate (AON), [acyl-carrier protein], and carbon dioxide. The sequence is that of 8-amino-7-oxononanoate synthase from Mycobacterium ulcerans (strain Agy99).